The sequence spans 644 residues: Protein DA1-related 6 (644 aa).

3 consecutive UIM domains span residues 119–138 (EEDE…NNRR), 181–200 (DVDE…KGKG), and 244–263 (DEDE…KGQI). The LIM zinc-binding domain occupies 284-355 (SLCGGCNFAV…YVCKEKKMKT (72 aa)). A compositionally biased stretch (low complexity) spans 572 to 589 (ASSSASSSSRTPPAASAS). Residues 572–591 (ASSSASSSSRTPPAASASKK) are disordered.

In terms of assembly, interacts with ubiquitin.

Functionally, ubiquitin receptor that probably regulates developmental process. The polypeptide is Protein DA1-related 6 (DAR6) (Arabidopsis thaliana (Mouse-ear cress)).